Reading from the N-terminus, the 257-residue chain is ATP synthase subunit a (257 aa).

A propeptide spans 1–8 (MRHLDFVL) (removed in mature form). Transmembrane regions (helical) follow at residues 34 to 54 (LTNI…YSLL), 93 to 113 (FFPL…IGLV), 122 to 142 (HFIL…ILGF), 149 to 169 (FFSL…LVLI), 187 to 207 (ANIL…YNIM), 210 to 230 (GIIF…FSGL), and 231 to 251 (ELAI…SYIK).

Belongs to the ATPase A chain family. As to quaternary structure, F-type ATPases have 2 components, CF(1) - the catalytic core - and CF(0) - the membrane proton channel. CF(1) has five subunits: alpha(3), beta(3), gamma(1), delta(1), epsilon(1). CF(0) has three main subunits: a, b and c.

It is found in the mitochondrion inner membrane. Mitochondrial membrane ATP synthase (F(1)F(0) ATP synthase or Complex V) produces ATP from ADP in the presence of a proton gradient across the membrane which is generated by electron transport complexes of the respiratory chain. F-type ATPases consist of two structural domains, F(1) - containing the extramembraneous catalytic core and F(0) - containing the membrane proton channel, linked together by a central stalk and a peripheral stalk. During catalysis, ATP synthesis in the catalytic domain of F(1) is coupled via a rotary mechanism of the central stalk subunits to proton translocation. Key component of the proton channel; it may play a direct role in the translocation of protons across the membrane. This chain is ATP synthase subunit a (atp6), found in Penicillium chrysogenum (Penicillium notatum).